The sequence spans 387 residues: MSLTASSTPQGFSTFITNLGIRDTTEDFVFLRSDVPCVADGVFTQSLFAGPSVTISRQNLQDGQAQGIIIISKNANVANGAVGIADAQEIIQLVAQETGIAAENLAIASTGVIGRRYPIEKIRAGLVGMGQKLTAADFDLAARGIMTTDTVSKIAARQVGNAKLVGIAKGVGMIEPNMATMLAFFFTDAAISANTLRQIFRSTIDKTFNCLSIDTDTSTSDSAVILANGLAGEVPEAEFASALQEIAHDLVLKIARDGEGATKVIEVTVDSAANYAQAKRVAKAIVNSPLVKTAVYGADPNWGRVAMAIGKCEDERDINPDQVVIRFDEVQVYPNTFQAENLEKLKEIMSKEKVNIHVSLNIGTDVATVWGCDLTEGYVEINGKYST.

The substrate site is built by T147, K169, T180, E259, N382, and T387. The Nucleophile role is filled by T180.

It belongs to the ArgJ family. Heterotetramer of two alpha and two beta chains.

It is found in the cytoplasm. It carries out the reaction N(2)-acetyl-L-ornithine + L-glutamate = N-acetyl-L-glutamate + L-ornithine. It catalyses the reaction L-glutamate + acetyl-CoA = N-acetyl-L-glutamate + CoA + H(+). Its pathway is amino-acid biosynthesis; L-arginine biosynthesis; L-ornithine and N-acetyl-L-glutamate from L-glutamate and N(2)-acetyl-L-ornithine (cyclic): step 1/1. It functions in the pathway amino-acid biosynthesis; L-arginine biosynthesis; N(2)-acetyl-L-ornithine from L-glutamate: step 1/4. Functionally, catalyzes two activities which are involved in the cyclic version of arginine biosynthesis: the synthesis of N-acetylglutamate from glutamate and acetyl-CoA as the acetyl donor, and of ornithine by transacetylation between N(2)-acetylornithine and glutamate. The chain is Arginine biosynthesis bifunctional protein ArgJ 2 from Nostoc sp. (strain PCC 7120 / SAG 25.82 / UTEX 2576).